Consider the following 159-residue polypeptide: MEPDAMTETPTELGTADIMRVMELLPHRYPFLLVDRITAINGDDSCIGIKNVTINEPQFTGHFPAMPVFPGVLLVEGMAQTAGAICCAHKLQNNTKPSRVYLMTIDKVKFRKPVVPGDTVEYHMKKVSNRRFMWWFRGEAKVNGVLVAEAEIGAMLVTE.

Residue His62 is part of the active site.

The protein belongs to the thioester dehydratase family. FabZ subfamily.

It is found in the cytoplasm. It catalyses the reaction a (3R)-hydroxyacyl-[ACP] = a (2E)-enoyl-[ACP] + H2O. In terms of biological role, involved in unsaturated fatty acids biosynthesis. Catalyzes the dehydration of short chain beta-hydroxyacyl-ACPs and long chain saturated and unsaturated beta-hydroxyacyl-ACPs. This chain is 3-hydroxyacyl-[acyl-carrier-protein] dehydratase FabZ, found in Methylobacterium nodulans (strain LMG 21967 / CNCM I-2342 / ORS 2060).